We begin with the raw amino-acid sequence, 498 residues long: Minor fimbrium subunit Mfa1 (498 aa).

Positions 1-19 are cleaved as a signal peptide; it reads MKLNKMFLVGALLSLGFAS. A lipid anchor (N-palmitoyl cysteine) is attached at Cys20. Cys20 carries S-diacylglycerol cysteine lipidation. A propeptide spanning residues 20-50 is cleaved from the precursor; that stretch reads CSKEGNGPAPDSSSTADTHMSVSMSLPQHNR. The disordered stretch occupies residues 436-476; sequence SGNPFVPTDPDPNNPDTPDNPDTPDPEDPDTPNPEEPLPVQ.

Belongs to the bacteroidetes fimbrillin superfamily. FimA/Mfa1 family. Structural component of the fimbrial stalk. Minor fimbriae are composed of a structural subunit, such as the 53 kDa fimbrillin, and the accessory subunits Mfa3, Mfa4 and Mfa5. Fimbrium assembly occurs by linear, head-to-tail oligomerization of fimbrial subunits. This is mediated via insertion of a C-terminal beta-strand from one subunit into a groove in the N-terminal domain of the following subunit.

It is found in the fimbrium. The protein resides in the cell outer membrane. Functionally, structural subunit of the minor fimbriae. These filamentous pili are attached to the cell surface; they mediate biofilm formation, adhesion onto host cells and onto other bacteria that are part of the oral microbiome. They play an important role in invasion of periodontal tissues and are recognized as major virulence factors. Mfa1 orthologs from different strains have highly divergent sequences, and this correlates with pathogenicity. The protein is Minor fimbrium subunit Mfa1 of Porphyromonas gingivalis (Bacteroides gingivalis).